A 413-amino-acid polypeptide reads, in one-letter code: Putative F-box protein At3g23970 (413 aa).

The F-box domain occupies 1–42 (MNIPPELTFEVLVRLPLKSLARFRSVRKEWKLVIDSEFFRDC).

In Arabidopsis thaliana (Mouse-ear cress), this protein is Putative F-box protein At3g23970.